Here is a 360-residue protein sequence, read N- to C-terminus: MITQRQNAILNLIVEMFTRTHEPVCSKALQDSIDSSSATIRNDMAKLEKMGYLEKAHISSGRMPSRAGFQYFVANSLNLDTIDEQDVYQVVKAFDFEAFKLEDILDAAAKLLAEMTGCTAVIQDVEPTKQRLTGFEIVQLSNHDALAVLTLDESKPVTVQFAIPKNFLSSDLEIFHKLVQGRFLGNTVLDIHYRLRTETPQIVQKYFKITDNVLDLFDYIFSHLFKELIFIEGKVASLAYADLKTYQFLDNPQHVALALRSAISDDEVTKISVAESTEEALENVTVMSHKFLIPYRGTALMHVIGPIEMDYRRMVSLVNVISRVLVMKLTDYYRYLNSNHYEVFLSRNVLKNIERGECLD.

The protein belongs to the HrcA family.

Functionally, negative regulator of class I heat shock genes (grpE-dnaK-dnaJ and groELS operons). Prevents heat-shock induction of these operons. The protein is Heat-inducible transcription repressor HrcA of Streptococcus thermophilus (strain CNRZ 1066).